Here is a 226-residue protein sequence, read N- to C-terminus: Glutathione peroxidase 3 (226 aa).

The signal sequence occupies residues 1 to 24 (MARILRASCLLSLLLAGFVPPGRG). Sec73 is a catalytic residue. Sec73 is a non-standard amino acid (selenocysteine).

It belongs to the glutathione peroxidase family. Homotetramer. Secreted in plasma.

Its subcellular location is the secreted. The catalysed reaction is 2 glutathione + H2O2 = glutathione disulfide + 2 H2O. The enzyme catalyses tert-butyl hydroperoxide + 2 glutathione = tert-butanol + glutathione disulfide + H2O. Its function is as follows. Protects cells and enzymes from oxidative damage, by catalyzing the reduction of hydrogen peroxide, lipid peroxides and organic hydroperoxide, by glutathione. The chain is Glutathione peroxidase 3 from Rattus norvegicus (Rat).